Consider the following 266-residue polypeptide: Glutamate racemase (266 aa).

Residues 9–10 (DS) and 41–42 (YG) each bind substrate. Cysteine 72 (proton donor/acceptor) is an active-site residue. 73 to 74 (NT) is a substrate binding site. The active-site Proton donor/acceptor is the cysteine 184. 185-186 (TH) provides a ligand contact to substrate.

Belongs to the aspartate/glutamate racemases family.

It catalyses the reaction L-glutamate = D-glutamate. It functions in the pathway cell wall biogenesis; peptidoglycan biosynthesis. Functionally, provides the (R)-glutamate required for cell wall biosynthesis. This chain is Glutamate racemase, found in Staphylococcus haemolyticus (strain JCSC1435).